We begin with the raw amino-acid sequence, 420 residues long: Homeobox-containing protein 1 (420 aa).

The HNF-p1 domain maps to 18–49; sequence DEPRFTIEQIDLLQRLRRTGMTKHEILHALET. The interval 56-139 is disordered; it reads EHSDKFGRRS…GKMSPTRYHA (84 aa). A Glycyl lysine isopeptide (Lys-Gly) (interchain with G-Cter in SUMO2) cross-link involves residue Lys60. Low complexity-rich tracts occupy residues 64–73 and 81–93; these read RSSYGGSSYG and ASSS…TQTQ. A compositionally biased stretch (polar residues) spans 94-132; it reads HSGMSPSPSNSYDTSPQPCTTNQNGRENNERLSTSNGKM. A Glycyl lysine isopeptide (Lys-Gly) (interchain with G-Cter in SUMO2) cross-link involves residue Lys131. Residues 145-241 form the POU-specific atypical domain; it reads RSYSFEASEE…PGATLSMRPA (97 aa). A Phosphoserine modification is found at Ser148. Lys161 is covalently cross-linked (Glycyl lysine isopeptide (Lys-Gly) (interchain with G-Cter in SUMO2)). Residue Ser170 is modified to Phosphoserine. Residues Lys174, Lys217, and Lys310 each participate in a glycyl lysine isopeptide (Lys-Gly) (interchain with G-Cter in SUMO2) cross-link. Residues 267–341 constitute a DNA-binding region (homeobox); sequence RRGSRFTWRK…NRRKEIKRRA (75 aa). Residues 353-385 form a disordered region; it reads IDVQSPGGHSNSDDVDGNDYSEQDDSTSHSDHQ. Residues 365–377 show a composition bias toward acidic residues; it reads DDVDGNDYSEQDD. A Glycyl lysine isopeptide (Lys-Gly) (interchain with G-Cter in SUMO1); alternate cross-link involves residue Lys413. Lys413 is covalently cross-linked (Glycyl lysine isopeptide (Lys-Gly) (interchain with G-Cter in SUMO2); alternate).

Associates with the telomerase holoenzyme complex. Interacts with DKC1, XRCC6 and COIL. As to expression, ubiquitous. Detected in pancreas, brain, spleen, placenta, prostate, thymus, liver, heart, bone marrow, skeletal muscle, stomach, uterus, testis, kidney, ovary, colon, lung, cardiac muscle and thyroid gland.

It is found in the nucleus. Its subcellular location is the cytoplasm. The protein resides in the chromosome. The protein localises to the telomere. It localises to the cajal body. It is found in the PML body. Functionally, binds directly to 5'-TTAGGG-3' repeats in telomeric DNA. Associates with the telomerase complex at sites of active telomere processing and positively regulates telomere elongation. Important for TERT binding to chromatin, indicating a role in recruitment of the telomerase complex to telomeres. Also plays a role in the alternative lengthening of telomeres (ALT) pathway in telomerase-negative cells where it promotes formation and/or maintenance of ALT-associated promyelocytic leukemia bodies (APBs). Enhances formation of telomere C-circles in ALT cells, suggesting a possible role in telomere recombination. Might also be involved in the DNA damage response at telomeres. This Homo sapiens (Human) protein is Homeobox-containing protein 1.